The chain runs to 426 residues: 4-hydroxy-3-methylbut-2-en-1-yl diphosphate synthase (flavodoxin) (426 aa).

[4Fe-4S] cluster is bound by residues Cys-310, Cys-313, Cys-356, and Glu-363.

The protein belongs to the IspG family. [4Fe-4S] cluster serves as cofactor.

It carries out the reaction (2E)-4-hydroxy-3-methylbut-2-enyl diphosphate + oxidized [flavodoxin] + H2O + 2 H(+) = 2-C-methyl-D-erythritol 2,4-cyclic diphosphate + reduced [flavodoxin]. It functions in the pathway isoprenoid biosynthesis; isopentenyl diphosphate biosynthesis via DXP pathway; isopentenyl diphosphate from 1-deoxy-D-xylulose 5-phosphate: step 5/6. Its function is as follows. Converts 2C-methyl-D-erythritol 2,4-cyclodiphosphate (ME-2,4cPP) into 1-hydroxy-2-methyl-2-(E)-butenyl 4-diphosphate. This Rhodopseudomonas palustris (strain BisA53) protein is 4-hydroxy-3-methylbut-2-en-1-yl diphosphate synthase (flavodoxin).